A 132-amino-acid chain; its full sequence is Small ribosomal subunit protein uS8 (132 aa).

Belongs to the universal ribosomal protein uS8 family. Part of the 30S ribosomal subunit. Contacts proteins S5 and S12.

In terms of biological role, one of the primary rRNA binding proteins, it binds directly to 16S rRNA central domain where it helps coordinate assembly of the platform of the 30S subunit. The sequence is that of Small ribosomal subunit protein uS8 from Arthrobacter sp. (strain FB24).